The primary structure comprises 492 residues: FAD-containing monooxygenase EthA (492 aa).

FAD is bound by residues serine 15, glutamate 36, 44-47 (TWDL), aspartate 56, and valine 104. Residue 54-56 (RSD) participates in NADP(+) binding. Residues 183-189 (SGATAVT) and 207-208 (RS) each bind NADP(+).

Belongs to the FAD-binding monooxygenase family. Requires FAD as cofactor.

The protein resides in the cell membrane. It carries out the reaction ethionamide + NADPH + O2 + H(+) = ethionamide S-oxide + NADP(+) + H2O. Functionally, monooxygenase able to convert a wide range of ketones to the corresponding esters or lactones via a Baeyer-Villiger oxidation reaction. Can act on long-chain aliphatic ketones (2-hexanone to 2-dodecanone) and on aromatic ketones (phenylacetone and benzylacetone). Is also able to catalyze enantioselective sulfoxidation of methyl-p-tolylsulfide. In vivo, likely functions as a BVMO, but the exact nature of the physiological substrate(s) remains to be established. Is responsible for the activation of several thiocarbamide-containing pro-drugs, such as ethionamide (ETH), isoxyl (ISO) and thiacetazone (TAC), into reactive species. This chain is FAD-containing monooxygenase EthA (ethA), found in Mycolicibacterium smegmatis (strain ATCC 700084 / mc(2)155) (Mycobacterium smegmatis).